The chain runs to 230 residues: 2-amino-5-formylamino-6-ribosylaminopyrimidin-4(3H)-one 5'-monophosphate deformylase (230 aa).

Positions 29, 31, 40, and 109 each coordinate Fe cation.

It belongs to the creatininase superfamily. FAPy deformylase family. In terms of assembly, homodimer. Fe(2+) serves as cofactor. Zn(2+) is required as a cofactor.

It catalyses the reaction 2-amino-5-formylamino-6-(5-phospho-D-ribosylamino)pyrimidin-4(3H)-one + H2O = 2,5-diamino-6-(1-D-ribosylamino)pyrimidin-4(3H)-one 5'-phosphate + formate + H(+). Its pathway is cofactor biosynthesis; coenzyme F420 biosynthesis. It participates in cofactor biosynthesis; riboflavin biosynthesis. In terms of biological role, catalyzes the hydrolysis of the formamide of 2-amino-5-formylamino-6-ribosylamino-4(3H)-pyrimidinone 5'-monophosphate (FAPy) to form 2,5-diamino-6-ribosylamino-4(3H)-pyrimidinone 5'-phosphate (APy). The chain is 2-amino-5-formylamino-6-ribosylaminopyrimidin-4(3H)-one 5'-monophosphate deformylase from Methanobrevibacter smithii (strain ATCC 35061 / DSM 861 / OCM 144 / PS).